The chain runs to 1703 residues: Pecanex-like protein 1 (1703 aa).

2 consecutive transmembrane segments (helical) span residues 31 to 53 and 57 to 74; these read VNAL…YMAL and MVIV…FLLL. A compositionally biased stretch (basic and acidic residues) spans 91–100; that stretch reads VEHQTRESKG. The disordered stretch occupies residues 91–126; that stretch reads VEHQTRESKGSRGGTGGANDPVTRREDSNGLGDPGG. N256 carries N-linked (GlcNAc...) asparagine glycosylation. 3 helical membrane passes run 416 to 438, 477 to 499, and 525 to 547; these read VLAV…HGFF, AYSR…YGSL, and LVIV…QVNT. Residue N564 is glycosylated (N-linked (GlcNAc...) asparagine). 4 consecutive transmembrane segments (helical) span residues 569–591, 603–622, 675–697, and 704–721; these read LLSA…CFCY, IPVL…YHLS, LIVC…FIAL, and VLYG…YLLP. N988, N1129, and N1391 each carry an N-linked (GlcNAc...) asparagine glycan. Disordered stretches follow at residues 1475–1556 and 1577–1598; these read VQSG…HSIP and TDPL…PTHA. Low complexity-rich tracts occupy residues 1485-1510 and 1518-1556; these read ARAS…RTST and RSST…HSIP. The segment covering 1582 to 1591 has biased composition (basic residues); it reads QHHHPHHHPQ. N1622 is a glycosylation site (N-linked (GlcNAc...) asparagine).

It belongs to the pecanex family.

It localises to the membrane. The sequence is that of Pecanex-like protein 1 from Takifugu rubripes (Japanese pufferfish).